The following is a 1084-amino-acid chain: Autophagy-related protein 11 (1084 aa).

Coiled-coil stretches lie at residues 585–739 (VQNL…LTES) and 847–879 (VIRR…TNDK). 2 disordered regions span residues 925 to 961 (SMIP…NMNR) and 973 to 1007 (NIGS…STNA). Low complexity-rich tracts occupy residues 940–949 (SNTNNSNPSS) and 973–993 (NIGS…NGNN). A compositionally biased stretch (polar residues) spans 994–1007 (KPETNIDTTSSTNA).

Belongs to the ATG11 family. As to quaternary structure, homodimer and potential homooligomers. Interacts with ATG1 kinase and the ATG19 and ATG34 cargo protein transporters. Interacts with ATG9, ATG17 and ATG20.

It localises to the preautophagosomal structure membrane. The protein localises to the vacuole membrane. Functionally, involved in cytoplasm to vacuole transport (Cvt), pexophagy, mitophagy and nucleophagy. Recruits mitochondria for their selective degradation via autophagy (mitophagy) during starvation, through its interaction with ATG32. Works as scaffold proteins that recruit ATG proteins to the pre-autophagosome (PAS), the site of vesicle/autophagosome formation. Required for ATG9 anterograde transport from the mitochondria to the PAS. Also recruits the ATG19-prAPE1 complex to the PAS. Required for the Cvt vesicles completion. The protein is Autophagy-related protein 11 of Kluyveromyces marxianus (strain DMKU3-1042 / BCC 29191 / NBRC 104275) (Yeast).